The following is a 453-amino-acid chain: Transcription factor bHLH110 (453 aa).

2 disordered regions span residues 1–37 (MDSA…YGAS) and 177–197 (SSLP…RGNF). Low complexity-rich tracts occupy residues 8–32 (QLQD…SDPS) and 177–192 (SSLP…SSQS). Positions 322–371 (VESRSSCPPFKVRKEKLGDRIAALQQLVSPFGKTDTASVLMEAIGYIKFL) constitute a bHLH domain. A disordered region spans residues 386 to 411 (SRNRPGKASQLVSQSQEGDEEETRDL).

Homodimer.

It is found in the nucleus. The polypeptide is Transcription factor bHLH110 (BHLH110) (Arabidopsis thaliana (Mouse-ear cress)).